A 394-amino-acid polypeptide reads, in one-letter code: S-adenosylmethionine synthase 3 (394 aa).

Glu-11 contacts Mg(2+). His-17 contacts ATP. Glu-45 is a binding site for K(+). Positions 58 and 101 each coordinate L-methionine. ATP contacts are provided by residues 169–171 (DGK), 237–240 (SGRF), Asp-248, 254–255 (RK), Ala-271, Lys-275, and Lys-279. Asp-248 contacts L-methionine. Lys-279 lines the L-methionine pocket.

This sequence belongs to the AdoMet synthase family. In terms of assembly, homotetramer. The cofactor is Mn(2+). Requires Mg(2+) as cofactor. It depends on Co(2+) as a cofactor. K(+) is required as a cofactor.

The protein localises to the cytoplasm. The catalysed reaction is L-methionine + ATP + H2O = S-adenosyl-L-methionine + phosphate + diphosphate. The protein operates within amino-acid biosynthesis; S-adenosyl-L-methionine biosynthesis; S-adenosyl-L-methionine from L-methionine: step 1/1. Functionally, catalyzes the formation of S-adenosylmethionine from methionine and ATP. The reaction comprises two steps that are both catalyzed by the same enzyme: formation of S-adenosylmethionine (AdoMet) and triphosphate, and subsequent hydrolysis of the triphosphate. The chain is S-adenosylmethionine synthase 3 (SAM3) from Hordeum vulgare (Barley).